The sequence spans 828 residues: MSTFSLENCLNGSYGVDTPEEVTFIRRRDANPSAFHGEETVPSNTTEVHSESVSYSSDFEGYSCDSDFTGDNQYSSFDGADSLLLSYDIDEYIDLSESELRVLFDEMVQPIHFGMVLSPTFSRNRFLSCLSLAKSVVVAPLYDPERTLRPFPELVKNLYSGVHDIYLSDSEEAAISSVTDTIEGYTFSPRDVVDNYEPPPLCSVCGLIAYQCPHYDINSLRKNCAEMTIAHDYPIEGLCGLIDDATLLKNLGSFLLPIQCEYTKLPEPTLITPPELTRPTDRVTVDLLQAICDSTLPTHVCYDDTYHQTFIENADYSVDIDRVRLKQSDLLAKVIDEGHLKPVLNTGSGQKRIGTTREVLCAIKKRNADVPELCGSVNLKRLSDDVAECFMLSFMNGDKLCSSNFINIVSDFHAYMSKWQSVLSYDDLPDLNAENLQFYEHMVKSDVKPSVTDTLNIDRPLPATITFHRKQLTSQFSPLFTALFQRFQRCLTKRVILPVGKISSLEIKDFSVLNKFCLEIDLSKFDKSQGELHLMIQEGILNRLGCPVHISKWWCDFHRMSYIKDKRAGVSMPISFQRRTGDAFTYFGNTLVTMSMFAWCYDTSQFDKLIFSGDDSLGFSIKAPVGDPSLFTSLFNMEAKVMEPSVPYICSKFLLTDDFGNTFSVPDPLREIQRLGSKKIPLDEDDRSLHAHFMSFVDRLKFLNHMNQTSMTQLSLFYEMKYRKSGDDILLVLGAFNKYTANFNAYKELYYSEKQQCALINSFSISDLIVGRGKSSKASRRKAVESNGKHRDPSTRDHSKVGTDESKETSTEETTQTEPQGAGSQKSK.

The region spanning 515–628 (KFCLEIDLSK…FSIKAPVGDP (114 aa)) is the RdRp catalytic domain. Residues 776–828 (SKASRRKAVESNGKHRDPSTRDHSKVGTDESKETSTEETTQTEPQGAGSQKSK) form a disordered region. Positions 782–810 (KAVESNGKHRDPSTRDHSKVGTDESKETS) are enriched in basic and acidic residues.

Belongs to the ssRNA positive-strand viruses RNA-directed RNA polymerase family. As to quaternary structure, interacts with replication protein 1a.

It carries out the reaction RNA(n) + a ribonucleoside 5'-triphosphate = RNA(n+1) + diphosphate. Functionally, RNA-dependent RNA polymerase which replicates the viral genome composed of 3 RNA segments, RNA1, RNA2 and RNA3. This is RNA-directed RNA polymerase 2a from Canna (Florist's daisy).